Here is a 126-residue protein sequence, read N- to C-terminus: Holo-[acyl-carrier-protein] synthase (126 aa).

Asp9 and Glu57 together coordinate Mg(2+).

It belongs to the P-Pant transferase superfamily. AcpS family. Requires Mg(2+) as cofactor.

It is found in the cytoplasm. The catalysed reaction is apo-[ACP] + CoA = holo-[ACP] + adenosine 3',5'-bisphosphate + H(+). In terms of biological role, transfers the 4'-phosphopantetheine moiety from coenzyme A to a Ser of acyl-carrier-protein. The polypeptide is Holo-[acyl-carrier-protein] synthase (Idiomarina loihiensis (strain ATCC BAA-735 / DSM 15497 / L2-TR)).